Here is a 200-residue protein sequence, read N- to C-terminus: Probable DNA-directed RNA polymerase subunit delta (200 aa).

An HTH HARE-type domain is found at 19–88; the sequence is LSMIEVARAI…GDNKWGLRSW (70 aa). 2 stretches are compositionally biased toward acidic residues: residues 125–143 and 150–200; these read DSDA…DAYE and YDDE…TSEE. Positions 125-200 are disordered; that stretch reads DSDAIDYNAD…SDDDAETSEE (76 aa).

This sequence belongs to the RpoE family. In terms of assembly, RNAP is composed of a core of 2 alpha, a beta and a beta' subunits. The core is associated with a delta subunit and one of several sigma factors.

Functionally, participates in both the initiation and recycling phases of transcription. In the presence of the delta subunit, RNAP displays an increased specificity of transcription, a decreased affinity for nucleic acids, and an increased efficiency of RNA synthesis because of enhanced recycling. This is Probable DNA-directed RNA polymerase subunit delta from Streptococcus pneumoniae serotype 4 (strain ATCC BAA-334 / TIGR4).